Here is a 435-residue protein sequence, read N- to C-terminus: Deoxybrevianamide E synthase (435 aa).

Residues 1-28 form a disordered region; sequence MTAPELRAPAGHPQEPPARSSPAQALSS. Glu-96 is a brevianamide F binding site. Dimethylallyl diphosphate-binding residues include Arg-110, Lys-195, Tyr-197, Lys-265, Tyr-267, Tyr-354, Tyr-419, and Tyr-423.

It belongs to the tryptophan dimethylallyltransferase family. In terms of assembly, monomer.

The enzyme catalyses brevianamide F + dimethylallyl diphosphate = deoxybrevianamide E + diphosphate. It functions in the pathway alkaloid biosynthesis. Functionally, deoxybrevianamide E synthase; part of the gene cluster that mediates the biosynthesis of notoamide, a fungal indole alkaloid that belongs to a family of natural products containing a characteristic bicyclo[2.2.2]diazaoctane core. The first step of notoamide biosynthesis involves coupling of L-proline and L-tryptophan by the bimodular NRPS notE', to produce cyclo-L-tryptophan-L-proline called brevianamide F. The reverse prenyltransferase notF' then acts as a deoxybrevianamide E synthase and converts brevianamide F to deoxybrevianamide E via reverse prenylation at C-2 of the indole ring leading to the bicyclo[2.2.2]diazaoctane core. Deoxybrevianamide E is further hydroxylated at C-6 of the indole ring, likely catalyzed by the cytochrome P450 monooxygenase notG', to yield 6-hydroxy-deoxybrevianamide E. 6-hydroxy-deoxybrevianamide E is a specific substrate of the prenyltransferase notC' for normal prenylation at C-7 to produce 6-hydroxy-7-prenyl-deoxybrevianamide, also called notoamide S. As the proposed pivotal branching point in notoamide biosynthesis, notoamide S can be diverted to notoamide E through an oxidative pyran ring closure putatively catalyzed by either notH' cytochrome P450 monooxygenase or the notD' FAD-linked oxidoreductase. This step would be followed by an indole 2,3-epoxidation-initiated pinacol-like rearrangement catalyzed by the notB' FAD-dependent monooxygenase leading to the formation of notoamide C and notoamide D. On the other hand notoamide S is converted to notoamide T by notH' (or notD'), a bifunctional oxidase that also functions as the intramolecular Diels-Alderase responsible for generation of (-)-notoamide T. To generate antipodal (+)-notoaminide T, notH (or notD) in Aspergillus strain MF297-2 is expected to catalyze a Diels-Alder reaction leading to the opposite stereochemistry. The remaining oxidoreductase notD' (or notH') likely catalyzes the oxidative pyran ring formation to yield (-)-stephacidin A. The FAD-dependent monooxygenase notI' is highly similar to notB' and is predicted to catalyze a similar conversion from (-)-stephacidin A to (+)-notoamide B via the 2,3-epoxidation of (-)-stephacidin A followed by a pinacol-type rearrangement. Finally, it remains unclear which enzyme could be responsible for the final hydroxylation steps leading to notoamide A and sclerotiamide. This Aspergillus versicolor protein is Deoxybrevianamide E synthase.